The primary structure comprises 104 residues: Viral histone-like protein (104 aa).

It belongs to the bacterial histone-like protein family. Homodimer.

The protein resides in the virion. Stilbene derivatives SD1 and SD4 disrupt the binding between pA104R and DNA and inhibit the viral replication in primary alveolar macrophages. Functionally, DNA-binding protein that plays a critical role in nucleoid compaction, genome replication and DNA replication and transcription. Binds to both ssDNA and dsDNA with a binding site covering about 15 nucleotides. Displays DNA-supercoiling activity only when associated with the viral DNA topoisomerase 2. This chain is Viral histone-like protein, found in African swine fever virus (strain Badajoz 1971 Vero-adapted) (Ba71V).